We begin with the raw amino-acid sequence, 212 residues long: Peptide methionine sulfoxide reductase MsrA (212 aa).

The segment covering 1 to 14 (MSSIDKTQRITQSD) has biased composition (polar residues). Residues 1–21 (MSSIDKTQRITQSDALPGRST) are disordered. Cys-52 is an active-site residue.

The protein belongs to the MsrA Met sulfoxide reductase family.

It carries out the reaction L-methionyl-[protein] + [thioredoxin]-disulfide + H2O = L-methionyl-(S)-S-oxide-[protein] + [thioredoxin]-dithiol. It catalyses the reaction [thioredoxin]-disulfide + L-methionine + H2O = L-methionine (S)-S-oxide + [thioredoxin]-dithiol. In terms of biological role, has an important function as a repair enzyme for proteins that have been inactivated by oxidation. Catalyzes the reversible oxidation-reduction of methionine sulfoxide in proteins to methionine. In Pectobacterium carotovorum subsp. carotovorum (strain PC1), this protein is Peptide methionine sulfoxide reductase MsrA.